We begin with the raw amino-acid sequence, 66 residues long: Opicalcin-2 (66 aa).

Positions 1–22 are cleaved as a signal peptide; that stretch reads MKPSLIIVTFIVVFMTISCVAA. The propeptide occupies 23 to 31; it reads DDEQETWIE. Cystine bridges form between Cys-36–Cys-50, Cys-43–Cys-54, and Cys-49–Cys-65. The segment at 55 to 57 is essential for stimulation of [3H]ryanodine binding to RYR1; the sequence is KRR.

It belongs to the scorpion calcin family. As to expression, expressed by the venom gland.

Its subcellular location is the secreted. Functionally, this toxin stabilizes ryanodine receptor 1 (RyR1) opening in a long-lasting subconductance state (40% of the full conductance state). Furthermore, it triggers calcium release from sarcoplasmic vesicles (64.2 nM are enough to induce a sharp release, and 50% of the total calcium is released after toxin (100 nM) addition) probably by acting as a cell-penetrating peptide (CPP). In addition, it has been shown to dose-dependently stimulate ryanodine binding to RyR1 (EC(50)=3.2 nM). It also augments the bell-shaped calcium-[3H]ryanodine binding curve that is maximal at about 10 uM calcium concentration. It binds a different site as ryanodine. It acts synergistically with caffeine. In vivo, intracerebroventricular injection into mice induces neurotoxic symptoms, followed by death. The protein is Opicalcin-2 of Opistophthalmus carinatus (African yellow leg scorpion).